An 802-amino-acid polypeptide reads, in one-letter code: Oligophrenin-1 (802 aa).

The PH domain maps to 265 to 368 (QPTIEGYLYT…WMEAMDGKEP (104 aa)). The 185-residue stretch at 380–564 (MELNEVGFKF…ILIEHFGKIY (185 aa)) folds into the Rho-GAP domain. 2 disordered regions span residues 606–665 (SLDE…SEPC) and 681–802 (GTKA…GDES). Residues 617 to 627 (QTPNGTITSNL) are compositionally biased toward polar residues. Residues 716–732 (HHKEGDTDGFSKVRPPG) show a composition bias toward basic and acidic residues.

Interacts with HOMER1. Interacts with AMPA receptor complexes. Interacts with SH3GL2 (endophilin-A1). Interacts (via C-terminus) with NR1D1.

It is found in the postsynapse. Its subcellular location is the presynapse. It localises to the cell projection. The protein localises to the axon. The protein resides in the dendritic spine. It is found in the dendrite. Its subcellular location is the cytoplasm. Its function is as follows. Stimulates GTP hydrolysis of members of the Rho family. Its action on RHOA activity and signaling is implicated in growth and stabilization of dendritic spines, and therefore in synaptic function. Critical for the stabilization of AMPA receptors at postsynaptic sites. Critical for the regulation of synaptic vesicle endocytosis at presynaptic terminals. Required for the localization of NR1D1 to dendrites, can suppress its repressor activity and protect it from proteasomal degradation. The polypeptide is Oligophrenin-1 (Ophn1) (Mus musculus (Mouse)).